A 516-amino-acid polypeptide reads, in one-letter code: Glycosyltransferase-like protein gnt15 (516 aa).

The Cytoplasmic segment spans residues 1–24 (MSNFYNNNPRRNTFRLTERIKKKP). The helical; Signal-anchor for type II membrane protein transmembrane segment at 25–45 (YQTLIVFILIFLFLYVFGPFG) threads the bilayer. The Extracellular segment spans residues 46-516 (EKKSNNNNNN…NDNCLTREHW (471 aa)). An N-linked (GlcNAc...) asparagine glycan is attached at asparagine 152. The segment at 199-250 (DTSNNNNNNNNNNNNNNNNNNNNNNNNNNNNNNNENNDNDNGNNNNNNDNEK) is disordered. The span at 202-246 (NNNNNNNNNNNNNNNNNNNNNNNNNNNNNNNENNDNDNGNNNNNN) shows a compositional bias: low complexity. N-linked (GlcNAc...) asparagine glycosylation is found at asparagine 386 and asparagine 412.

This sequence belongs to the glycosyltransferase 8 family. Highly divergent.

It localises to the membrane. In terms of biological role, may have a role in modulating cell adhesion and glycosylation. Essential for development. The sequence is that of Glycosyltransferase-like protein gnt15 (gnt15) from Dictyostelium discoideum (Social amoeba).